We begin with the raw amino-acid sequence, 332 residues long: Aspartate carbamoyltransferase catalytic subunit (332 aa).

The disordered stretch occupies residues Met1–Asp20. Carbamoyl phosphate is bound by residues Arg72 and Thr73. Lys100 lines the L-aspartate pocket. The carbamoyl phosphate site is built by Arg122, His152, and Gln155. Arg186 and Arg241 together coordinate L-aspartate. Carbamoyl phosphate-binding residues include Gly282 and Pro283.

It belongs to the aspartate/ornithine carbamoyltransferase superfamily. ATCase family. As to quaternary structure, heterododecamer (2C3:3R2) of six catalytic PyrB chains organized as two trimers (C3), and six regulatory PyrI chains organized as three dimers (R2).

The catalysed reaction is carbamoyl phosphate + L-aspartate = N-carbamoyl-L-aspartate + phosphate + H(+). The protein operates within pyrimidine metabolism; UMP biosynthesis via de novo pathway; (S)-dihydroorotate from bicarbonate: step 2/3. Its function is as follows. Catalyzes the condensation of carbamoyl phosphate and aspartate to form carbamoyl aspartate and inorganic phosphate, the committed step in the de novo pyrimidine nucleotide biosynthesis pathway. This Psychrobacter sp. (strain TAD1) protein is Aspartate carbamoyltransferase catalytic subunit.